The chain runs to 456 residues: Glycerol-3-phosphate acyltransferase 4 (456 aa).

Residues 1–37 form the signal peptide; the sequence is MFLLLPFDSLIVNLLGISLTVLFTLLLVFIIVPAIFG. 2 helical membrane-spanning segments follow: residues 156–176 and 180–200; these read ISLRLTILWGLGVLIRYCFLL and IALAFTGIGLLVVGTTMVGYL. A glycan (N-linked (GlcNAc...) asparagine) is linked at asparagine 247. The short motif at 248–253 is the HXXXXD motif element; the sequence is HTSPID. N-linked (GlcNAc...) asparagine glycans are attached at residues asparagine 327, asparagine 328, and asparagine 362.

This sequence belongs to the 1-acyl-sn-glycerol-3-phosphate acyltransferase family. In terms of tissue distribution, highly expressed in testis.

It is found in the endoplasmic reticulum membrane. It carries out the reaction sn-glycerol 3-phosphate + an acyl-CoA = a 1-acyl-sn-glycero-3-phosphate + CoA. The enzyme catalyses dodecanoyl-CoA + sn-glycerol 3-phosphate = 1-dodecanoyl-sn-glycerol 3-phosphate + CoA. It catalyses the reaction sn-glycerol 3-phosphate + hexadecanoyl-CoA = 1-hexadecanoyl-sn-glycero-3-phosphate + CoA. The catalysed reaction is sn-glycerol 3-phosphate + octadecanoyl-CoA = 1-octadecanoyl-sn-glycero-3-phosphate + CoA. It carries out the reaction sn-glycerol 3-phosphate + (9Z)-octadecenoyl-CoA = 1-(9Z-octadecenoyl)-sn-glycero-3-phosphate + CoA. The enzyme catalyses (9Z,12Z)-octadecadienoyl-CoA + sn-glycerol 3-phosphate = 1-(9Z,12Z)-octadecadienoyl-sn-glycero-3-phosphate + CoA. It functions in the pathway phospholipid metabolism; CDP-diacylglycerol biosynthesis; CDP-diacylglycerol from sn-glycerol 3-phosphate: step 1/3. Converts glycerol-3-phosphate to 1-acyl-sn-glycerol-3-phosphate (lysophosphatidic acid or LPA) by incorporating an acyl moiety at the sn-1 position of the glycerol backbone. Active against both saturated and unsaturated long-chain fatty acyl-CoAs. Protects cells against lipotoxicity. This is Glycerol-3-phosphate acyltransferase 4 from Mus musculus (Mouse).